A 122-amino-acid polypeptide reads, in one-letter code: Large ribosomal subunit protein bL12 (122 aa).

The protein belongs to the bacterial ribosomal protein bL12 family. In terms of assembly, homodimer. Part of the ribosomal stalk of the 50S ribosomal subunit. Forms a multimeric L10(L12)X complex, where L10 forms an elongated spine to which 2 to 4 L12 dimers bind in a sequential fashion. Binds GTP-bound translation factors.

Functionally, forms part of the ribosomal stalk which helps the ribosome interact with GTP-bound translation factors. Is thus essential for accurate translation. The protein is Large ribosomal subunit protein bL12 of Deinococcus radiodurans (strain ATCC 13939 / DSM 20539 / JCM 16871 / CCUG 27074 / LMG 4051 / NBRC 15346 / NCIMB 9279 / VKM B-1422 / R1).